The following is a 161-amino-acid chain: Transcriptional repressor NrdR (161 aa).

Residues 1 to 11 are compositionally biased toward polar residues; that stretch reads MRCPSCNSLDT. The segment at 1–20 is disordered; sequence MRCPSCNSLDTQVKDSRPTE. Residues 3-34 fold into a zinc finger; it reads CPSCNSLDTQVKDSRPTEDSSVIRRRRVCVTC. Residues 49–139 enclose the ATP-cone domain; sequence LTVIKRNGRR…VYRNFREAKD (91 aa).

The protein belongs to the NrdR family. It depends on Zn(2+) as a cofactor.

In terms of biological role, negatively regulates transcription of bacterial ribonucleotide reductase nrd genes and operons by binding to NrdR-boxes. The chain is Transcriptional repressor NrdR from Bradyrhizobium sp. (strain BTAi1 / ATCC BAA-1182).